The primary structure comprises 214 residues: Large ribosomal subunit protein bL25 (214 aa).

The interval Thr-194–Glu-214 is disordered. Basic and acidic residues predominate over residues Glu-204–Glu-214.

The protein belongs to the bacterial ribosomal protein bL25 family. CTC subfamily. In terms of assembly, part of the 50S ribosomal subunit; part of the 5S rRNA/L5/L18/L25 subcomplex. Contacts the 5S rRNA. Binds to the 5S rRNA independently of L5 and L18.

Functionally, this is one of the proteins that binds to the 5S RNA in the ribosome where it forms part of the central protuberance. The chain is Large ribosomal subunit protein bL25 from Thermotoga petrophila (strain ATCC BAA-488 / DSM 13995 / JCM 10881 / RKU-1).